A 202-amino-acid polypeptide reads, in one-letter code: Translation initiation factor IF-3 (202 aa).

It belongs to the IF-3 family. As to quaternary structure, monomer.

The protein localises to the cytoplasm. In terms of biological role, IF-3 binds to the 30S ribosomal subunit and shifts the equilibrium between 70S ribosomes and their 50S and 30S subunits in favor of the free subunits, thus enhancing the availability of 30S subunits on which protein synthesis initiation begins. The protein is Translation initiation factor IF-3 of Prochlorococcus marinus (strain NATL2A).